The following is a 205-amino-acid chain: Holliday junction branch migration complex subunit RuvA (205 aa).

Residues 1–67 (MIGWLKGDVQ…ADNLQLFGFL (67 aa)) form a domain I region. A domain II region spans residues 68-146 (QLAERDLFRE…DSVASTGPER (79 aa)). The segment at 147 to 155 (NQLDPVAPD) is flexible linker. The tract at residues 155 to 205 (DLIATLETLGFETHEIRDALQRLNGMGGPQDGDDDDAWLRACIKLMSSTDP) is domain III.

This sequence belongs to the RuvA family. Homotetramer. Forms an RuvA(8)-RuvB(12)-Holliday junction (HJ) complex. HJ DNA is sandwiched between 2 RuvA tetramers; dsDNA enters through RuvA and exits via RuvB. An RuvB hexamer assembles on each DNA strand where it exits the tetramer. Each RuvB hexamer is contacted by two RuvA subunits (via domain III) on 2 adjacent RuvB subunits; this complex drives branch migration. In the full resolvosome a probable DNA-RuvA(4)-RuvB(12)-RuvC(2) complex forms which resolves the HJ.

It localises to the cytoplasm. The RuvA-RuvB-RuvC complex processes Holliday junction (HJ) DNA during genetic recombination and DNA repair, while the RuvA-RuvB complex plays an important role in the rescue of blocked DNA replication forks via replication fork reversal (RFR). RuvA specifically binds to HJ cruciform DNA, conferring on it an open structure. The RuvB hexamer acts as an ATP-dependent pump, pulling dsDNA into and through the RuvAB complex. HJ branch migration allows RuvC to scan DNA until it finds its consensus sequence, where it cleaves and resolves the cruciform DNA. The protein is Holliday junction branch migration complex subunit RuvA of Parasynechococcus marenigrum (strain WH8102).